Here is a 277-residue protein sequence, read N- to C-terminus: Digeranylgeranylglyceryl phosphate synthase (277 aa).

The next 8 membrane-spanning stretches (helical) occupy residues 16–36 (ILAGIVGILGSLVAYEGIPPV), 40–60 (ILIFLVVYFGCSAGNTINDYF), 93–113 (FIGLIIALLLGWSAFLFALGA), 129–149 (FIGNVTVALLTAATPIYGAVG), 153–173 (IDLAGYLAICAFLVNVSREIM), 199–218 (SGIIASIFGFLTIISSFLPV), 222–244 (IGLGYLPIIIVDIMIAKASIDVL), and 253–273 (GQKILKFATFIAVISFLLGAL).

This sequence belongs to the UbiA prenyltransferase family. DGGGP synthase subfamily. Requires Mg(2+) as cofactor.

Its subcellular location is the cell membrane. It carries out the reaction sn-3-O-(geranylgeranyl)glycerol 1-phosphate + (2E,6E,10E)-geranylgeranyl diphosphate = 2,3-bis-O-(geranylgeranyl)-sn-glycerol 1-phosphate + diphosphate. It participates in membrane lipid metabolism; glycerophospholipid metabolism. Its function is as follows. Prenyltransferase that catalyzes the transfer of the geranylgeranyl moiety of geranylgeranyl diphosphate (GGPP) to the C2 hydroxyl of (S)-3-O-geranylgeranylglyceryl phosphate (GGGP). This reaction is the second ether-bond-formation step in the biosynthesis of archaeal membrane lipids. The sequence is that of Digeranylgeranylglyceryl phosphate synthase from Pyrococcus horikoshii (strain ATCC 700860 / DSM 12428 / JCM 9974 / NBRC 100139 / OT-3).